We begin with the raw amino-acid sequence, 72 residues long: ATP synthase subunit c (72 aa).

Helical transmembrane passes span 4–24 (ALGAGLAVSIAGIGGGIGMGI) and 46–66 (LLFITLAFIETLTIYGLLIAF).

The protein belongs to the ATPase C chain family. As to quaternary structure, F-type ATPases have 2 components, F(1) - the catalytic core - and F(0) - the membrane proton channel. F(1) has five subunits: alpha(3), beta(3), gamma(1), delta(1), epsilon(1). F(0) has three main subunits: a(1), b(2) and c(10-14). The alpha and beta chains form an alternating ring which encloses part of the gamma chain. F(1) is attached to F(0) by a central stalk formed by the gamma and epsilon chains, while a peripheral stalk is formed by the delta and b chains.

The protein localises to the cell membrane. Its function is as follows. F(1)F(0) ATP synthase produces ATP from ADP in the presence of a proton or sodium gradient. F-type ATPases consist of two structural domains, F(1) containing the extramembraneous catalytic core and F(0) containing the membrane proton channel, linked together by a central stalk and a peripheral stalk. During catalysis, ATP synthesis in the catalytic domain of F(1) is coupled via a rotary mechanism of the central stalk subunits to proton translocation. Key component of the F(0) channel; it plays a direct role in translocation across the membrane. A homomeric c-ring of between 10-14 subunits forms the central stalk rotor element with the F(1) delta and epsilon subunits. The protein is ATP synthase subunit c of Syntrophomonas wolfei subsp. wolfei (strain DSM 2245B / Goettingen).